A 371-amino-acid polypeptide reads, in one-letter code: Aminomethyltransferase (371 aa).

The protein belongs to the GcvT family. The glycine cleavage system is composed of four proteins: P, T, L and H.

It catalyses the reaction N(6)-[(R)-S(8)-aminomethyldihydrolipoyl]-L-lysyl-[protein] + (6S)-5,6,7,8-tetrahydrofolate = N(6)-[(R)-dihydrolipoyl]-L-lysyl-[protein] + (6R)-5,10-methylene-5,6,7,8-tetrahydrofolate + NH4(+). Its function is as follows. The glycine cleavage system catalyzes the degradation of glycine. The sequence is that of Aminomethyltransferase from Cellvibrio japonicus (strain Ueda107) (Pseudomonas fluorescens subsp. cellulosa).